The primary structure comprises 538 residues: Zinc finger protein with KRAB and SCAN domains 3 (538 aa).

A Phosphoserine modification is found at Ser42. Residues 46–128 (RERFRGFRYP…VLLEYLERQL (83 aa)) form the SCAN box domain. A Glycyl lysine isopeptide (Lys-Gly) (interchain with G-Cter in SUMO2) cross-link involves residue Lys171. Thr207 is modified (phosphothreonine). Positions 214–274 (LKVEDVALTL…PAEELPEKEH (61 aa)) constitute a KRAB domain. Polar residues predominate over residues 226-236 (EWTQQDSSQGN). Residues 226-274 (EWTQQDSSQGNLCRDEKQENHGSLVSLGDEKQTKSRDLPPAEELPEKEH) form a disordered region. The span at 253-274 (GDEKQTKSRDLPPAEELPEKEH) shows a compositional bias: basic and acidic residues. 5 C2H2-type zinc fingers span residues 314 to 336 (HICH…RRIH), 342 to 364 (YECE…QRVH), 370 to 392 (YECE…QRTH), 398 to 420 (YECD…HRIH), and 426 to 448 (YQCS…QRIH). Position 449 is a phosphothreonine (Thr449). C2H2-type zinc fingers lie at residues 480–502 (YKCN…QKIH) and 508–530 (YQCN…QRSH).

This sequence belongs to the krueppel C2H2-type zinc-finger protein family.

Its subcellular location is the nucleus. It is found in the cytoplasm. Transcriptional factor that binds to the consensus sequence 5'-[GT][AG][AGT]GGGG-3' and acts as a repressor of autophagy. Specifically represses expression of genes involved in autophagy and lysosome biogenesis/function such as MAP1LC3B, ULK1 or WIPI2. Associates with chromatin at the ITGB4 and VEGF promoters. Also acts as a transcription activator and promotes cancer cell progression and/or migration in various tumors and myelomas. This is Zinc finger protein with KRAB and SCAN domains 3 (ZKSCAN3) from Homo sapiens (Human).